A 791-amino-acid chain; its full sequence is MAARNKQKKRAEPESDLCFAGKPMSVVESTIRWPHRYQSKKTKLQAPTKKPANKGGKKEDEEIIKQAKCHFDKALVDGVLINLNDDVYVTGLPGKLKFIAKVIELFEADDGVPYCRFRWYYRPEDTLIERFSHLVQPKRVFLSNDENDNPLTCIWSKVNIAKVPLPKITSRIEQRVIPPCDYYYDMKYEVPYLNFTSADDGSDASSSLSSDSALNCFENLHKDEKFLLDLYSGCGAMSTGFCMGASISGVKLITKWSVDINKFACDSLKLNHPETEVRNEAAEDFLALLKEWKRLCEKFSLVSSTEPVESISELEDEEVEENDDIDEASTGAELEPGEFEVEKFLGIMFGDPQGTGEKTLQLMVRWKGYNSSYDTWEPYSGLGNCKEKLKEYVIDGFKSHLLPLPGTVYTVCGGPPCQGISGYNRYRNNEAPLEDQKNQQLLVFLDIIDFLKPNYVLMENVVDLLRFSKGFLARHAVASFVAMNYQTRLGMMAAGSYGLPQLRNRVFLWAAQPSEKLPPYPLPTHEVAKKFNTPKEFKDLQVGRIQMEFLKLDNALTLADAISDLPPVTNYVANDVMDYNDAAPKTEFENFISLKRSETLLPAFGGDPTRRLFDHQPLVLGDDDLERVSYIPKQKGANYRDMPGVLVHNNKAEINPRFRAKLKSGKNVVPAYAISFIKGKSKKPFGRLWGDEIVNTVVTRAEPHNQCVIHPMQNRVLSVRENARLQGFPDCYKLCGTIKEKYIQVGNAVAVPVGVALGYAFGMASQGLTDDEPVIKLPFKYPECMQAKDQI.

A disordered region spans residues Tyr37–Glu59. The 121-residue stretch at Val79 to Asp199 folds into the BAH domain. The 544-residue stretch at Lys225–Leu768 folds into the SAM-dependent MTase C5-type domain. The stretch at Val308–Glu333 forms a coiled coil. A Chromo domain is found at Phe339–Leu404. Residue Cys417 is part of the active site.

The protein belongs to the class I-like SAM-binding methyltransferase superfamily. C5-methyltransferase family. Expressed in flowers. Not detected in leaves, roots, seedlings and plants prior formation of flower buds.

It localises to the nucleus. It catalyses the reaction a 2'-deoxycytidine in DNA + S-adenosyl-L-methionine = a 5-methyl-2'-deoxycytidine in DNA + S-adenosyl-L-homocysteine + H(+). May be involved in the CpXpG methylation and in gene silencing. The chain is Putative DNA (cytosine-5)-methyltransferase CMT1 (CMT1) from Arabidopsis thaliana (Mouse-ear cress).